A 206-amino-acid polypeptide reads, in one-letter code: LexA repressor (206 aa).

A DNA-binding region (H-T-H motif) is located at residues 28–48; sequence VREICNAVGLSSTSTVHGHLS. Active-site for autocatalytic cleavage activity residues include Ser128 and Lys166.

It belongs to the peptidase S24 family. In terms of assembly, homodimer.

It carries out the reaction Hydrolysis of Ala-|-Gly bond in repressor LexA.. Represses a number of genes involved in the response to DNA damage (SOS response), including recA and lexA. In the presence of single-stranded DNA, RecA interacts with LexA causing an autocatalytic cleavage which disrupts the DNA-binding part of LexA, leading to derepression of the SOS regulon and eventually DNA repair. This chain is LexA repressor, found in Ligilactobacillus salivarius (strain UCC118) (Lactobacillus salivarius).